The sequence spans 372 residues: Glutamate 5-kinase (372 aa).

K14 lines the ATP pocket. S54, D141, and N153 together coordinate substrate. 173-174 (TD) is a binding site for ATP. One can recognise a PUA domain in the interval 280-358 (RGRVIIDAGA…SEIESVLGHL (79 aa)).

Belongs to the glutamate 5-kinase family.

Its subcellular location is the cytoplasm. The enzyme catalyses L-glutamate + ATP = L-glutamyl 5-phosphate + ADP. It participates in amino-acid biosynthesis; L-proline biosynthesis; L-glutamate 5-semialdehyde from L-glutamate: step 1/2. Catalyzes the transfer of a phosphate group to glutamate to form L-glutamate 5-phosphate. The protein is Glutamate 5-kinase of Cupriavidus metallidurans (strain ATCC 43123 / DSM 2839 / NBRC 102507 / CH34) (Ralstonia metallidurans).